The chain runs to 167 residues: Peptidyl-prolyl cis-trans isomerase-like 3 (167 aa).

The PPIase cyclophilin-type domain occupies 1–153 (MSVTLHTNLG…QEIKLLNVTV (153 aa)).

Belongs to the cyclophilin-type PPIase family. PPIL3 subfamily.

It carries out the reaction [protein]-peptidylproline (omega=180) = [protein]-peptidylproline (omega=0). Its function is as follows. PPIases accelerate the folding of proteins. It catalyzes the cis-trans isomerization of proline imidic peptide bonds in oligopeptides. The sequence is that of Peptidyl-prolyl cis-trans isomerase-like 3 (CYP10) from Cryptococcus neoformans var. neoformans serotype D (strain B-3501A) (Filobasidiella neoformans).